We begin with the raw amino-acid sequence, 100 residues long: Aspartyl/glutamyl-tRNA(Asn/Gln) amidotransferase subunit C (100 aa).

It belongs to the GatC family. As to quaternary structure, heterotrimer of A, B and C subunits.

It catalyses the reaction L-glutamyl-tRNA(Gln) + L-glutamine + ATP + H2O = L-glutaminyl-tRNA(Gln) + L-glutamate + ADP + phosphate + H(+). The enzyme catalyses L-aspartyl-tRNA(Asn) + L-glutamine + ATP + H2O = L-asparaginyl-tRNA(Asn) + L-glutamate + ADP + phosphate + 2 H(+). In terms of biological role, allows the formation of correctly charged Asn-tRNA(Asn) or Gln-tRNA(Gln) through the transamidation of misacylated Asp-tRNA(Asn) or Glu-tRNA(Gln) in organisms which lack either or both of asparaginyl-tRNA or glutaminyl-tRNA synthetases. The reaction takes place in the presence of glutamine and ATP through an activated phospho-Asp-tRNA(Asn) or phospho-Glu-tRNA(Gln). The chain is Aspartyl/glutamyl-tRNA(Asn/Gln) amidotransferase subunit C from Streptococcus pyogenes serotype M49 (strain NZ131).